The sequence spans 137 residues: Basic phospholipase A2 beta-bungarotoxin A5 chain (137 aa).

A signal peptide spans 1 to 9 (AVCVSLLGA). A propeptide spanning residues 10–17 (ANIPPQHL) is cleaved from the precursor. 6 disulfide bridges follow: C44–C136, C46–C62, C61–C117, C68–C110, C78–C103, and C96–C108. 3 residues coordinate Ca(2+): Y45, G47, and G49. H65 is an active-site residue. Residue D66 coordinates Ca(2+). The active site involves D111.

This sequence belongs to the phospholipase A2 family. Group I subfamily. D49 sub-subfamily. Heterodimer; disulfide-linked. The A chains have phospholipase A2 activity and the B chains show homology with the basic protease inhibitors. The cofactor is Ca(2+). In terms of tissue distribution, expressed by the venom gland.

It is found in the secreted. It carries out the reaction a 1,2-diacyl-sn-glycero-3-phosphocholine + H2O = a 1-acyl-sn-glycero-3-phosphocholine + a fatty acid + H(+). Functionally, snake venom phospholipase A2 (PLA2) that inhibits neuromuscular transmission by blocking acetylcholine release from the nerve termini. PLA2 catalyzes the calcium-dependent hydrolysis of the 2-acyl groups in 3-sn-phosphoglycerides. This is Basic phospholipase A2 beta-bungarotoxin A5 chain from Bungarus multicinctus (Many-banded krait).